The sequence spans 138 residues: Large ribosomal subunit protein uL16 (138 aa).

Positions 1 to 13 (MLQPSRRKFRKEQ) are enriched in basic residues. The segment at 1–20 (MLQPSRRKFRKEQKGRNTGV) is disordered.

The protein belongs to the universal ribosomal protein uL16 family. As to quaternary structure, part of the 50S ribosomal subunit.

In terms of biological role, binds 23S rRNA and is also seen to make contacts with the A and possibly P site tRNAs. This chain is Large ribosomal subunit protein uL16, found in Leptothrix cholodnii (strain ATCC 51168 / LMG 8142 / SP-6) (Leptothrix discophora (strain SP-6)).